The chain runs to 492 residues: Ketol-acid reductoisomerase (NADP(+)) (492 aa).

In terms of domain architecture, KARI N-terminal Rossmann spans 14–208; sequence LDQLGKCRFM…GGHRAGVLQS (195 aa). Residues 45-48, R68, R76, S78, and 108-110 contribute to the NADP(+) site; these read CGAQ and DKQ. H132 is an active-site residue. NADP(+) is bound at residue G158. 2 KARI C-terminal knotted domains span residues 209-344 and 345-485; these read SFVA…NAPQ and FDGK…MKDM. Mg(2+) is bound by residues D217, E221, E389, and E393. S414 serves as a coordination point for substrate.

The protein belongs to the ketol-acid reductoisomerase family. The cofactor is Mg(2+).

It carries out the reaction (2R)-2,3-dihydroxy-3-methylbutanoate + NADP(+) = (2S)-2-acetolactate + NADPH + H(+). The enzyme catalyses (2R,3R)-2,3-dihydroxy-3-methylpentanoate + NADP(+) = (S)-2-ethyl-2-hydroxy-3-oxobutanoate + NADPH + H(+). It participates in amino-acid biosynthesis; L-isoleucine biosynthesis; L-isoleucine from 2-oxobutanoate: step 2/4. The protein operates within amino-acid biosynthesis; L-valine biosynthesis; L-valine from pyruvate: step 2/4. In terms of biological role, involved in the biosynthesis of branched-chain amino acids (BCAA). Catalyzes an alkyl-migration followed by a ketol-acid reduction of (S)-2-acetolactate (S2AL) to yield (R)-2,3-dihydroxy-isovalerate. In the isomerase reaction, S2AL is rearranged via a Mg-dependent methyl migration to produce 3-hydroxy-3-methyl-2-ketobutyrate (HMKB). In the reductase reaction, this 2-ketoacid undergoes a metal-dependent reduction by NADPH to yield (R)-2,3-dihydroxy-isovalerate. This Pectobacterium atrosepticum (strain SCRI 1043 / ATCC BAA-672) (Erwinia carotovora subsp. atroseptica) protein is Ketol-acid reductoisomerase (NADP(+)).